A 165-amino-acid polypeptide reads, in one-letter code: Large ribosomal subunit protein uL10 (165 aa).

This sequence belongs to the universal ribosomal protein uL10 family. As to quaternary structure, part of the ribosomal stalk of the 50S ribosomal subunit. The N-terminus interacts with L11 and the large rRNA to form the base of the stalk. The C-terminus forms an elongated spine to which L12 dimers bind in a sequential fashion forming a multimeric L10(L12)X complex.

Its function is as follows. Forms part of the ribosomal stalk, playing a central role in the interaction of the ribosome with GTP-bound translation factors. The chain is Large ribosomal subunit protein uL10 from Deinococcus deserti (strain DSM 17065 / CIP 109153 / LMG 22923 / VCD115).